The sequence spans 816 residues: Oxysterol-binding protein-related protein 1D (816 aa).

The PH domain occupies 92 to 229 (GAGVAGIMYK…WVEAFQVAKD (138 aa)). The stretch at 290-321 (KHIILLDTLRQLETEKIELEATVVDETKEHDS) forms a coiled coil. The interval 340–362 (SASDSEADNESQDGADVESDEDD) is disordered. A compositionally biased stretch (acidic residues) spans 344-362 (SEADNESQDGADVESDEDD). Residues 735–764 (NGEYESANAEKLRLEQLQRQARRLQEKGWK) adopt a coiled-coil conformation.

It belongs to the OSBP family. As to expression, expressed in roots, leaves, stems and flowers.

Functionally, may be involved in the transport of sterols. This chain is Oxysterol-binding protein-related protein 1D (ORP1D), found in Arabidopsis thaliana (Mouse-ear cress).